The following is a 257-amino-acid chain: Zinc transporter ZupT (257 aa).

Transmembrane regions (helical) follow at residues 5–25 (LILT…GVLG), 32–52 (LLAF…LMEM), and 61–81 (GMSP…YFGL). Residues asparagine 120 and glutamate 123 each contribute to the Fe(2+) site. Residues glutamate 123 and histidine 148 each contribute to the Zn(2+) site. 4 consecutive transmembrane segments (helical) span residues 137–157 (LGFG…LAVA), 171–191 (ILWA…AWLI), 195–215 (MISP…MVAL), and 236–256 (GVLC…TAGI). Fe(2+) is bound by residues asparagine 149, glutamate 152, and glutamate 181. Glutamate 152 contacts Zn(2+).

It belongs to the ZIP transporter (TC 2.A.5) family. ZupT subfamily.

The protein localises to the cell inner membrane. The catalysed reaction is Zn(2+)(in) = Zn(2+)(out). In terms of biological role, mediates zinc uptake. May also transport other divalent cations. In Escherichia coli O7:K1 (strain IAI39 / ExPEC), this protein is Zinc transporter ZupT.